The following is a 412-amino-acid chain: Phosphoglycerate kinase (412 aa).

Residues 24–26 (DLN), Arg47, 70–73 (HLGR), Arg130, and Arg167 each bind substrate. ATP contacts are provided by residues Lys217, Gly312, Glu343, and 369-372 (GGDS).

The protein belongs to the phosphoglycerate kinase family. Monomer.

The protein localises to the cytoplasm. It catalyses the reaction (2R)-3-phosphoglycerate + ATP = (2R)-3-phospho-glyceroyl phosphate + ADP. Its pathway is carbohydrate degradation; glycolysis; pyruvate from D-glyceraldehyde 3-phosphate: step 2/5. This chain is Phosphoglycerate kinase, found in Kineococcus radiotolerans (strain ATCC BAA-149 / DSM 14245 / SRS30216).